The sequence spans 406 residues: Tryptophan 2,3-dioxygenase (406 aa).

At Ser-19 the chain carries Phosphoserine. Substrate-binding positions include 72-76 (FIITH) and Arg-144. His-328 contacts heme. Thr-342 contributes to the substrate binding site.

It belongs to the tryptophan 2,3-dioxygenase family. Homotetramer. Dimer of dimers. Requires heme as cofactor.

It carries out the reaction L-tryptophan + O2 = N-formyl-L-kynurenine. Its pathway is amino-acid degradation; L-tryptophan degradation via kynurenine pathway; L-kynurenine from L-tryptophan: step 1/2. Functionally, heme-dependent dioxygenase that catalyzes the oxidative cleavage of the L-tryptophan (L-Trp) pyrrole ring and converts L-tryptophan to N-formyl-L-kynurenine. Catalyzes the oxidative cleavage of the indole moiety. This is Tryptophan 2,3-dioxygenase from Mus musculus (Mouse).